Reading from the N-terminus, the 845-residue chain is Protein translocase subunit SecA 1 (845 aa).

ATP is bound by residues Gln85, 103-107 (GEGKT), and Asp492.

The protein belongs to the SecA family. Monomer and homodimer. Part of the essential Sec protein translocation apparatus which comprises SecA, SecYEG and auxiliary proteins SecDF. Other proteins may also be involved.

Its subcellular location is the cell membrane. The protein localises to the cytoplasm. The enzyme catalyses ATP + H2O + cellular proteinSide 1 = ADP + phosphate + cellular proteinSide 2.. Part of the Sec protein translocase complex. Interacts with the SecYEG preprotein conducting channel. Has a central role in coupling the hydrolysis of ATP to the transfer of proteins into and across the cell membrane, serving as an ATP-driven molecular motor driving the stepwise translocation of polypeptide chains across the membrane. In Corynebacterium efficiens (strain DSM 44549 / YS-314 / AJ 12310 / JCM 11189 / NBRC 100395), this protein is Protein translocase subunit SecA 1.